We begin with the raw amino-acid sequence, 219 residues long: uncharacterized protein (219 aa).

Residues 1-15 are Cytoplasmic-facing; sequence MLKLTTTSVTFHVLR. Residues 16 to 36 form a helical membrane-spanning segment; it reads YFQLGLSVTNLLLASFAIITN. The Vacuolar portion of the chain corresponds to 37–41; it reads YKVDR. The chain crosses the membrane as a helical span at residues 42 to 62; that stretch reads ILRLSLAVSIISSVYFGIVRF. A topological domain (cytoplasmic) is located at residue Leu-63. Residues 64–84 form a helical membrane-spanning segment; sequence PVLLIFVMEIVQTVLWFTAFV. Over 85–116 the chain is Vacuolar; the sequence is TLASKFGSMSCSSMPRGINFDYSGSCKIAKID. Residues 117-137 form a helical membrane-spanning segment; the sequence is ILPEAVLFILFLATTYASYIT. At 138 to 219 the chain is on the cytoplasmic side; that stretch reads VLSQAKENGS…VIDGSIEHSS (82 aa). The segment at 176–219 is disordered; that stretch reads PLLDLEVQEDARTETESIEDSTDSEDNANIEQEKVIDGSIEHSS. Positions 191 to 203 are enriched in acidic residues; sequence ESIEDSTDSEDNA. Basic and acidic residues predominate over residues 206 to 219; that stretch reads EQEKVIDGSIEHSS.

It localises to the vacuole membrane. This is an uncharacterized protein from Saccharomyces cerevisiae (strain ATCC 204508 / S288c) (Baker's yeast).